The chain runs to 837 residues: Enterin neuropeptides (837 aa).

An N-terminal signal peptide occupies residues 1–25; sequence MAKHDVTVMTLLLVVCALHVFDAQG. The propeptide occupies 26–47; it reads TDVKLNDGFLRSGIMNIPFQRR. Valine 57 carries the post-translational modification Valine amide. Positions 61–134 are excised as a propeptide; the sequence is SGFQSPVSPS…ENKRFSKENE (74 aa). A Valine amide modification is found at valine 146. Positions 150-178 are excised as a propeptide; that stretch reads MDLSALEKELIAKLKAADLLSPLETEAPG. The residue at position 190 (leucine 190) is a Leucine amide. Positions 194–201 are excised as a propeptide; that stretch reads MPVDVFPR. Valine 211 carries the post-translational modification Valine amide. The propeptide occupies 215-234; sequence SGNGENYFDDLDTFGDISQR. At valine 244 the chain carries Valine amide. Positions 248–266 are excised as a propeptide; that stretch reads GNTDFSRNPLARLSQVQNR. Position 276 is a valine amide (valine 276). A propeptide spanning residues 280-285 is cleaved from the precursor; that stretch reads SVHNIV. Position 297 is a valine amide (valine 297). Positions 301–325 are excised as a propeptide; the sequence is DFEDASEGLDEEEGDIDGYSDDLDV. Residues valine 336, valine 348, valine 360, valine 372, valine 384, valine 396, valine 408, valine 420, valine 432, valine 444, valine 456, valine 468, valine 480, valine 492, valine 504, valine 516, valine 528, and valine 540 each carry the valine amide modification. Positions 544–595 are excised as a propeptide; that stretch reads ELGEDEINFLKEVDAADISRQLAEEDEKEAMVSVDDKETLSNEEDASEDDFE. The segment at 567–594 is disordered; the sequence is EEDEKEAMVSVDDKETLSNEEDASEDDF. Positions 584-593 are enriched in acidic residues; the sequence is SNEEDASEDD. Position 598 is a pyrrolidone carboxylic acid (Glu); in form ENl' (glutamate 598). Valine 606 carries the post-translational modification Valine amide. The propeptide occupies 610-627; that stretch reads DEEGDMGVEMEEEMESEK. A Leucine amide modification is found at leucine 637. At glutamine 641 the chain carries Pyrrolidone carboxylic acid. Position 649 is a valine amide (valine 649). A Pyrrolidone carboxylic acid modification is found at glutamine 653. Valine amide occurs at positions 661 and 673. Glutamine 677 carries the pyrrolidone carboxylic acid modification. Valine 685 and valine 697 each carry valine amide. At glutamine 701 the chain carries Pyrrolidone carboxylic acid. Valine 709 bears the Valine amide mark. Glutamine 713 carries the pyrrolidone carboxylic acid modification. At valine 721 the chain carries Valine amide. Glutamine 725 is subject to Pyrrolidone carboxylic acid. At valine 733 the chain carries Valine amide. The propeptide occupies 734–837; that stretch reads GKRSGAEDID…DSHIMATSST (104 aa). Positions 772-837 are disordered; the sequence is GQPAAANEEE…DSHIMATSST (66 aa). Residues 778-791 are compositionally biased toward acidic residues; it reads NEEELQQEAAEESE.

As to expression, high expression in gut and CNS.

It localises to the secreted. Its function is as follows. Reduce interneurons B4/5 activity. May play a regulatory role in nonfeeding behaviors. The polypeptide is Enterin neuropeptides (ENPP) (Aplysia californica (California sea hare)).